The sequence spans 100 residues: Large ribosomal subunit protein bL21 (100 aa).

Belongs to the bacterial ribosomal protein bL21 family. In terms of assembly, part of the 50S ribosomal subunit. Contacts protein L20.

In terms of biological role, this protein binds to 23S rRNA in the presence of protein L20. In Deinococcus deserti (strain DSM 17065 / CIP 109153 / LMG 22923 / VCD115), this protein is Large ribosomal subunit protein bL21.